Reading from the N-terminus, the 319-residue chain is Acetyl-coenzyme A carboxylase carboxyl transferase subunit alpha (319 aa).

Positions 38–292 (ALDKKAETLL…GKAIEMMLKE (255 aa)) constitute a CoA carboxyltransferase C-terminal domain.

This sequence belongs to the AccA family. In terms of assembly, acetyl-CoA carboxylase is a heterohexamer composed of biotin carboxyl carrier protein (AccB), biotin carboxylase (AccC) and two subunits each of ACCase subunit alpha (AccA) and ACCase subunit beta (AccD).

It is found in the cytoplasm. It catalyses the reaction N(6)-carboxybiotinyl-L-lysyl-[protein] + acetyl-CoA = N(6)-biotinyl-L-lysyl-[protein] + malonyl-CoA. The protein operates within lipid metabolism; malonyl-CoA biosynthesis; malonyl-CoA from acetyl-CoA: step 1/1. Its function is as follows. Component of the acetyl coenzyme A carboxylase (ACC) complex. First, biotin carboxylase catalyzes the carboxylation of biotin on its carrier protein (BCCP) and then the CO(2) group is transferred by the carboxyltransferase to acetyl-CoA to form malonyl-CoA. This Cereibacter sphaeroides (strain ATCC 17029 / ATH 2.4.9) (Rhodobacter sphaeroides) protein is Acetyl-coenzyme A carboxylase carboxyl transferase subunit alpha.